We begin with the raw amino-acid sequence, 104 residues long: UPF0213 protein in VLF1-GP41 intergenic region (104 aa).

The GIY-YIG domain occupies 9–89 (KVWCVYILRQ…SKYFKLRLIK (81 aa)).

This sequence belongs to the UPF0213 family.

The chain is UPF0213 protein in VLF1-GP41 intergenic region from Autographa californica nuclear polyhedrosis virus (AcMNPV).